Reading from the N-terminus, the 163-residue chain is Small heat shock protein C1 (163 aa).

In terms of domain architecture, sHSP spans 55–163 (TFYESSSLKS…EQDSREITIN (109 aa)).

It belongs to the small heat shock protein (HSP20) family.

This chain is Small heat shock protein C1 (hspC1), found in Rickettsia prowazekii (strain Madrid E).